The primary structure comprises 420 residues: Phospholipase A1-II 3 (420 aa).

An N-terminal signal peptide occupies residues 1–21 (MCCFLLVSVLLATTLTDVASA). N231 carries N-linked (GlcNAc...) asparagine glycosylation. Residue S240 is the Acyl-ester intermediate of the active site. S240 acts as the Charge relay system in catalysis. N294 carries N-linked (GlcNAc...) asparagine glycosylation. Active-site charge relay system residues include D305 and H343. Positions 367–388 (VVDRDLALVNKEVDALRDEYQV) form a coiled coil. N403 is a glycosylation site (N-linked (GlcNAc...) asparagine).

This sequence belongs to the AB hydrolase superfamily. Lipase family.

The protein localises to the secreted. Its function is as follows. Acylhydrolase that catalyzes the hydrolysis of phospholipids at the sn-1 position. This Oryza sativa subsp. indica (Rice) protein is Phospholipase A1-II 3.